The primary structure comprises 198 residues: Phosphoheptose isomerase (198 aa).

An SIS domain is found at 36–195; the sequence is AIEVYQNGNK…EEAIFRNKFV (160 aa). 51 to 53 contacts substrate; it reads NGG. Histidine 60 and glutamate 64 together coordinate Zn(2+). Substrate is bound by residues glutamate 64, 93-94, 119-121, serine 124, and glutamine 171; these read ND and STS. Zn(2+) is bound by residues glutamine 171 and histidine 179.

It belongs to the SIS family. GmhA subfamily. It depends on Zn(2+) as a cofactor.

The protein resides in the cytoplasm. It catalyses the reaction 2 D-sedoheptulose 7-phosphate = D-glycero-alpha-D-manno-heptose 7-phosphate + D-glycero-beta-D-manno-heptose 7-phosphate. It functions in the pathway carbohydrate biosynthesis; D-glycero-D-manno-heptose 7-phosphate biosynthesis; D-glycero-alpha-D-manno-heptose 7-phosphate and D-glycero-beta-D-manno-heptose 7-phosphate from sedoheptulose 7-phosphate: step 1/1. It participates in cell surface structure biogenesis; S-layer biogenesis. Functionally, catalyzes the isomerization of sedoheptulose 7-phosphate in D-glycero-D-manno-heptose 7-phosphate. This Aneurinibacillus thermoaerophilus protein is Phosphoheptose isomerase.